The sequence spans 168 residues: Group IIF secretory phospholipase A2 (168 aa).

A signal peptide spans 1–20 (MKKFFAIAVLAGSVVTTAHS). 7 cysteine pairs are disulfide-bonded: Cys46-Cys138, Cys48-Cys64, Cys63-Cys120, Cys69-Cys145, Cys70-Cys113, Cys79-Cys106, and Cys98-Cys111. Ca(2+)-binding residues include Tyr47, Gly49, and Gly51. His67 is an active-site residue. Asp68 is a binding site for Ca(2+). Asn92 and Asn102 each carry an N-linked (GlcNAc...) asparagine glycan. The active site involves Asp114. The segment at 139–168 (QGPTPNCSIYDPYPEEVTCGHGLPATPVST) is required for localization on the plasma membrane. A glycan (N-linked (GlcNAc...) asparagine) is linked at Asn144.

It belongs to the phospholipase A2 family. It depends on Ca(2+) as a cofactor. As to expression, strongly expressed in testis.

It localises to the secreted. The protein resides in the cell membrane. It catalyses the reaction a 1,2-diacyl-sn-glycero-3-phosphocholine + H2O = a 1-acyl-sn-glycero-3-phosphocholine + a fatty acid + H(+). The catalysed reaction is 1-hexadecanoyl-2-(9Z-octadecenoyl)-sn-glycero-3-phospho-(1'-sn-glycerol) + H2O = 1-hexadecanoyl-sn-glycero-3-phospho-(1'-sn-glycerol) + (9Z)-octadecenoate + H(+). The enzyme catalyses 1-hexadecanoyl-2-(9Z,12Z-octadecadienoyl)-sn-glycero-3-phosphoethanolamine + H2O = 1-hexadecanoyl-sn-glycero-3-phosphoethanolamine + (9Z,12Z)-octadecadienoate + H(+). It carries out the reaction 1-hexadecanoyl-2-(5Z,8Z,11Z,14Z-eicosatetraenoyl)-sn-glycero-3-phosphoethanolamine + H2O = 1-hexadecanoyl-sn-glycero-3-phosphoethanolamine + (5Z,8Z,11Z,14Z)-eicosatetraenoate + H(+). It catalyses the reaction 1-hexadecanoyl-2-(9Z-octadecenoyl)-sn-glycero-3-phosphocholine + H2O = 1-hexadecanoyl-sn-glycero-3-phosphocholine + (9Z)-octadecenoate + H(+). The catalysed reaction is 1-hexadecanoyl-2-(9Z-octadecenoyl)-sn-glycero-3-phospho-L-serine + H2O = 1-hexadecanoyl-sn-glycero-3-phospho-L-serine + (9Z)-octadecenoate + H(+). Functionally, secretory calcium-dependent phospholipase A2 that primarily targets extracellular phospholipids. Hydrolyzes the ester bond of the fatty acyl group attached at the sn-2 position of phospholipids (phospholipase A2 activity), the catalytic efficiency decreasing in the following order: phosphatidylglycerols &gt; phosphatidylethanolamines &gt; phosphatidylcholines &gt; phosphatidylserines. May play a role in lipid mediator production in inflammatory conditions, by providing arachidonic acid to downstream cyclooxygenases and lipoxygenases. This Mus musculus (Mouse) protein is Group IIF secretory phospholipase A2 (Pla2g2f).